We begin with the raw amino-acid sequence, 103 residues long: Iron-sulfur cluster assembly protein CyaY (103 aa).

It belongs to the frataxin family.

Its function is as follows. Involved in iron-sulfur (Fe-S) cluster assembly. May act as a regulator of Fe-S biogenesis. The polypeptide is Iron-sulfur cluster assembly protein CyaY (Rickettsia peacockii (strain Rustic)).